Reading from the N-terminus, the 867-residue chain is MPQKTKETPMMAQYQKVKDQYPDAFLFYRLGDFYELFNDDAVKASQLLELTLTARNKNAADPIPMCGVPHHAAQNYIDILVDQGYKVAICEQMEDPKTAKGMVKREVVQLVTPGTVMDEKAGHAKQNNYLTAVVAQGDQFGFAYTDLSTGEMKVSQISSLDVLLNEMLSLQTKEVVVNHDVPSEVVQAFVQQQILVSYQDEGADTAEVSFVSQNISQPLALAVIKQLVVYLATTQKRHLGHLQRAQAYEPSQYLKLDHSAKMNLELTASLRTGHKSGTLLWLLDETKTAMGGRLLKQWLERPLLDLNQIKNRQNQVASFLQHYFERTNLQEALTKVYDLERLAGRVAFGSVNGRDLIQLKTSLEQIPKIKDVLTGINETQAFDQALTRLDPVDDVRTLIETAINPDSPISVTDGGIIQDGYDEQLDQYRNAMSNGKQWLAQLEAQEREATGIHNLKIGFNRVFGYYIEVTRANLSSLPEGRYERKQTLTNAERFITPELKEKEQLILEAEERSTALEYELFTQVREQVKLQIERLQTLAKGVAALDVLQSFAVVSESYHYVQPTLRTDSREIDLVDGRHPVVEKVLGRQKYIPNAVQMGKETDMLLITGPNMSGKSTYMRQLALTVIMAQMGCFVPAKSANLPVFDQIFTRIGAADDLISGQSTFMVEMMEANRAIMSATANSLILFDEIGRGTATYDGMALAQAIIEYIHDHVHAKTLFSTHYHELTALADTLTALRNVHVGAVEENGELVFLHKMLAGPADKSYGIHVAKLAGMPETLLQRADVILGQLEDKPKAPVQPATVAPAQPAAAAVEEQMALFEPEVAAPVDKKTDKVVAAIKNFDLMSATPLEALNQLYEWQKQLNKH.

Residue 609–616 (GPNMSGKS) coordinates ATP.

This sequence belongs to the DNA mismatch repair MutS family.

Its function is as follows. This protein is involved in the repair of mismatches in DNA. It is possible that it carries out the mismatch recognition step. This protein has a weak ATPase activity. This chain is DNA mismatch repair protein MutS, found in Latilactobacillus sakei subsp. sakei (strain 23K) (Lactobacillus sakei subsp. sakei).